The sequence spans 302 residues: Pyridoxal 5'-phosphate synthase subunit PdxS (302 aa).

Residue D32 coordinates D-ribose 5-phosphate. K89 acts as the Schiff-base intermediate with D-ribose 5-phosphate in catalysis. G161 provides a ligand contact to D-ribose 5-phosphate. D-glyceraldehyde 3-phosphate is bound at residue R173. D-ribose 5-phosphate contacts are provided by residues G222 and 243-244 (GS). Residues 276–302 (ASNIGEGMQGDPNADLPEDERMQDRGN) form a disordered region.

It belongs to the PdxS/SNZ family. In the presence of PdxT, forms a dodecamer of heterodimers.

The catalysed reaction is aldehydo-D-ribose 5-phosphate + D-glyceraldehyde 3-phosphate + L-glutamine = pyridoxal 5'-phosphate + L-glutamate + phosphate + 3 H2O + H(+). Its pathway is cofactor biosynthesis; pyridoxal 5'-phosphate biosynthesis. Its function is as follows. Catalyzes the formation of pyridoxal 5'-phosphate from ribose 5-phosphate (RBP), glyceraldehyde 3-phosphate (G3P) and ammonia. The ammonia is provided by the PdxT subunit. Can also use ribulose 5-phosphate and dihydroxyacetone phosphate as substrates, resulting from enzyme-catalyzed isomerization of RBP and G3P, respectively. This chain is Pyridoxal 5'-phosphate synthase subunit PdxS, found in Halobacterium salinarum (strain ATCC 29341 / DSM 671 / R1).